Consider the following 78-residue polypeptide: D-alanyl carrier protein (78 aa).

In terms of domain architecture, Carrier spans 1–78 (MDVENTVVEI…KIIAKAKELQ (78 aa)). Ser-36 is subject to O-(pantetheine 4'-phosphoryl)serine.

Belongs to the DltC family. In terms of processing, 4'-phosphopantetheine is transferred from CoA to a specific serine of apo-DCP.

The protein resides in the cytoplasm. Its pathway is cell wall biogenesis; lipoteichoic acid biosynthesis. Carrier protein involved in the D-alanylation of lipoteichoic acid (LTA). The loading of thioester-linked D-alanine onto DltC is catalyzed by D-alanine--D-alanyl carrier protein ligase DltA. The DltC-carried D-alanyl group is further transferred to cell membrane phosphatidylglycerol (PG) by forming an ester bond, probably catalyzed by DltD. D-alanylation of LTA plays an important role in modulating the properties of the cell wall in Gram-positive bacteria, influencing the net charge of the cell wall. This is D-alanyl carrier protein from Latilactobacillus sakei subsp. sakei (strain 23K) (Lactobacillus sakei subsp. sakei).